We begin with the raw amino-acid sequence, 100 residues long: MADSPVRPSMSHSYHCRIYVTLRPSVLDPAGTAVQSGLQQLGYDGVSQVRIGKYIELTLEAPDEATASQQLDTMCDQLLANTVIENYCFEITALEGAVTP.

The protein belongs to the PurS family. Homodimer. Part of the FGAM synthase complex composed of 1 PurL, 1 PurQ and 2 PurS subunits.

The protein localises to the cytoplasm. It carries out the reaction N(2)-formyl-N(1)-(5-phospho-beta-D-ribosyl)glycinamide + L-glutamine + ATP + H2O = 2-formamido-N(1)-(5-O-phospho-beta-D-ribosyl)acetamidine + L-glutamate + ADP + phosphate + H(+). Its pathway is purine metabolism; IMP biosynthesis via de novo pathway; 5-amino-1-(5-phospho-D-ribosyl)imidazole from N(2)-formyl-N(1)-(5-phospho-D-ribosyl)glycinamide: step 1/2. Part of the phosphoribosylformylglycinamidine synthase complex involved in the purines biosynthetic pathway. Catalyzes the ATP-dependent conversion of formylglycinamide ribonucleotide (FGAR) and glutamine to yield formylglycinamidine ribonucleotide (FGAM) and glutamate. The FGAM synthase complex is composed of three subunits. PurQ produces an ammonia molecule by converting glutamine to glutamate. PurL transfers the ammonia molecule to FGAR to form FGAM in an ATP-dependent manner. PurS interacts with PurQ and PurL and is thought to assist in the transfer of the ammonia molecule from PurQ to PurL. This chain is Phosphoribosylformylglycinamidine synthase subunit PurS, found in Synechocystis sp. (strain ATCC 27184 / PCC 6803 / Kazusa).